A 635-amino-acid polypeptide reads, in one-letter code: Extracellular metalloproteinase MEP (635 aa).

Positions 1–19 (MRAFLLASLASLPAVNVYA) are cleaved as a signal peptide. The propeptide occupies 20–244 (HPTHNSRGLT…VHAVVDYAAE (225 aa)). Residues Asn-287, Asn-302, and Asn-336 are each glycosylated (N-linked (GlcNAc...) asparagine). His-429 provides a ligand contact to Zn(2+). Glu-430 is an active-site residue. A Zn(2+)-binding site is contributed by His-433.

The protein belongs to the peptidase M36 family. The cofactor is Zn(2+).

It is found in the secreted. Its function is as follows. Secreted metalloproteinase that allows assimilation of proteinaceous substrates. This is Extracellular metalloproteinase MEP (MEP) from Leptosphaeria maculans (strain JN3 / isolate v23.1.3 / race Av1-4-5-6-7-8) (Blackleg fungus).